Reading from the N-terminus, the 3388-residue chain is Genome polyprotein (3388 aa).

Positions 1-15 (MNDQRKKARNTPFNM) are interaction with host EXOC1. Over 1-101 (MNDQRKKARN…LNILNRRRRT (101 aa)) the chain is Cytoplasmic. Residues 37–72 (MLQGRGPLKLFMALVAFLRFLTIPPTAGILKRWGTI) are hydrophobic; homodimerization of capsid protein C. The propeptide at 101-114 (TAGMIIMLIPTVMA) is ER anchor for the capsid protein C, removed in mature form by serine protease NS3. Residues 102–122 (AGMIIMLIPTVMAFHLTTRNG) traverse the membrane as a helical segment. Residues 123–238 (EPHMIVSRQE…GAWKHAQRIE (116 aa)) lie on the Extracellular side of the membrane. Residue N183 is glycosylated (N-linked (GlcNAc...) asparagine; by host). A helical membrane pass occupies residues 239 to 259 (TWILRHPGFTIMAAILAYTIG). The Cytoplasmic segment spans residues 260–265 (TTHFQR). The helical transmembrane segment at 266–280 (VLIFILLTAIAPSMT) threads the bilayer. At 281 to 725 (MRCIGISNRD…LHQVFGAIYG (445 aa)) the chain is on the extracellular side. Cystine bridges form between C283-C310, C340-C401, C354-C385, and C372-C396. N347 is a glycosylation site (N-linked (GlcNAc...) asparagine; by host). Residues 378–391 (DRGWGNGCGLFGKG) form a fusion peptide region. N433 is a glycosylation site (N-linked (GlcNAc...) asparagine; by host). Intrachain disulfides connect C465–C565 and C582–C613. Residues 726-746 (AAFSGVSWTMKILIGVIITWI) form a helical membrane-spanning segment. Residues 747 to 752 (GMNSRS) are Cytoplasmic-facing. The helical transmembrane segment at 753-773 (TSLSVSLVLVGIVTLYLGVMV) threads the bilayer. At 774 to 1195 (QADSGCVVSW…MVGATMTDDI (422 aa)) the chain is on the extracellular side. 6 cysteine pairs are disulfide-bonded: C779/C790, C830/C918, C954/C998, C1055/C1104, C1066/C1088, and C1087/C1091. Residues N905 and N982 are each glycosylated (N-linked (GlcNAc...) asparagine; by host). N1134 carries N-linked (GlcNAc...) asparagine; by host glycosylation. Residues 1196 to 1220 (GMGVTYLALLAAFKVRPTFAAGLLL) form a helical membrane-spanning segment. Topologically, residues 1221 to 1226 (RKLTSK) are cytoplasmic. The helical transmembrane segment at 1227–1245 (ELMMTTIGIVLLSQSSIPE) threads the bilayer. At 1246–1269 (TILELTDALALGMMVLKMVRNMEK) the chain is on the lumenal side. Residues 1270–1290 (YQLAVTIMAILCVPNAVILQN) traverse the membrane as a helical segment. Position 1291 (A1291) is a topological domain, cytoplasmic. The helical transmembrane segment at 1292–1310 (WKVSCTILAVVSVSPLFLT) threads the bilayer. Topologically, residues 1311-1317 (SSQQKAD) are lumenal. The helical transmembrane segment at 1318–1338 (WIPLALTIKGLNPTAIFLTTL) threads the bilayer. Residues 1339-1346 (SRTSKKRS) are Cytoplasmic-facing. The helical transmembrane segment at 1347 to 1367 (WPLNEAIMAVGMVSILASSLL) threads the bilayer. Over 1368-1370 (KND) the chain is Lumenal. The helical transmembrane segment at 1371 to 1391 (TPMTGPLVAGGLLTVCYVLTG) threads the bilayer. Topologically, residues 1392–1447 (RSADLELERATDVKWDDQAEISGSSPILSITISEDGSMSIKNEEEEQTLTILIRTG) are cytoplasmic. The tract at residues 1398–1437 (LERATDVKWDDQAEISGSSPILSITISEDGSMSIKNEEEE) is interacts with and activates NS3 protease. Residues 1448–1468 (LLVISGLFPVSIPITAAAWYL) constitute an intramembrane region (helical). The Cytoplasmic segment spans residues 1469–2144 (WEVKKQRAGV…LSELPETLET (676 aa)). Residues 1476 to 1653 (AGVLWDVPSP…EKSIEDNPEI (178 aa)) form the Peptidase S7 domain. Residues H1526, D1550, and S1610 each act as charge relay system; for serine protease NS3 activity in the active site. The region spanning 1655-1811 (DDIFRKRRLT…QSNAPIMDEE (157 aa)) is the Helicase ATP-binding domain. Residues 1659–1662 (RKRR) are important for RNA-binding. 1668–1675 (LHPGAGKT) contacts ATP. The DEAH box signature appears at 1759 to 1762 (DEAH). Positions 1821–1988 (SGHEWVTDFK…IIPSMFEPER (168 aa)) constitute a Helicase C-terminal domain. K1863 carries the N6-acetyllysine; by host modification. The chain crosses the membrane as a helical span at residues 2145–2165 (LLLLTLLATVTGGIFLFLMSG). At 2166 to 2167 (RG) the chain is on the lumenal side. Residues 2168-2188 (IGKMTLGMCCIITASILLWYA) constitute an intramembrane region (helical). Position 2189 (Q2189) is a topological domain, lumenal. The helical transmembrane segment at 2190 to 2210 (IQPHWIAASIILEFFLIVLLI) threads the bilayer. Topologically, residues 2211–2225 (PEPEKQRTPQDNQLT) are cytoplasmic. A helical membrane pass occupies residues 2226-2246 (YVIIAILTVVAATMANEMGFL). Topologically, residues 2247–2271 (EKTKKDLGLGNIATQQPESNILDID) are lumenal. The helical intramembrane region spans 2272–2292 (LRPASAWTLYAVATTFITPML). Over 2293-2313 (RHSIENSSVNVSLTAIANQAT) the chain is Lumenal. N-linked (GlcNAc...) asparagine; by host glycosylation is found at N2298 and N2302. An intramembrane region (helical) is located at residues 2314–2334 (VLMGLGKGWPLSKMDIGVPLL). At 2335-2344 (AIGCYSQVNP) the chain is on the lumenal side. The helical transmembrane segment at 2345-2365 (ITLTAALLLLVAHYAIIGPGL) threads the bilayer. The Cytoplasmic segment spans residues 2366–2410 (QAKATREAQKRAAAGIMKNPTVDGITVIDLDPIPYDPKFEKQLGQ). The chain crosses the membrane as a helical span at residues 2411–2431 (VMLLVLCVTQVLMMRTTWALC). Residues 2432-2456 (EALTLATGPVSTLWEGNPGRFWNTT) are Lumenal-facing. Residue N2454 is glycosylated (N-linked (GlcNAc...) asparagine; by host). A helical transmembrane segment spans residues 2457-2477 (IAVSMANIFRGSYLAGAGLLF). At 2478 to 3388 (SIMKNTTSTR…REEEEAGVLW (911 aa)) the chain is on the cytoplasmic side. The mRNA cap 0-1 NS5-type MT domain maps to 2490 to 2752 (TGNIGETLGE…DVDLGSGTRN (263 aa)). S2544 contacts S-adenosyl-L-methionine. S2544 is modified (phosphoserine). Catalysis depends on K2549, which acts as the For 2'-O-MTase activity. The short motif at 2565-2568 (VVDL) is the SUMO-interacting motif element. Residues G2574, W2575, T2592, K2593, D2619, and V2620 each contribute to the S-adenosyl-L-methionine site. D2634 acts as the For 2'-O-MTase activity in catalysis. I2635 serves as a coordination point for S-adenosyl-L-methionine. Residues K2669 and E2705 each act as for 2'-O-MTase activity in the active site. Y2707 is a binding site for S-adenosyl-L-methionine. E2926, H2930, C2935, and C2938 together coordinate Zn(2+). Residues 3017–3166 (AMYADDTAGW…PLDDRFARAL (150 aa)) enclose the RdRp catalytic domain. Zn(2+)-binding residues include H3200, C3216, and C3335.

This sequence in the N-terminal section; belongs to the class I-like SAM-binding methyltransferase superfamily. mRNA cap 0-1 NS5-type methyltransferase family. In terms of assembly, homodimer. Interacts (via N-terminus) with host EXOC1 (via C-terminus); this interaction results in EXOC1 degradation through the proteasome degradation pathway. As to quaternary structure, forms heterodimers with envelope protein E in the endoplasmic reticulum and Golgi. Homodimer; in the endoplasmic reticulum and Golgi. Interacts with protein prM. Interacts with non-structural protein 1. In terms of assembly, homodimer; Homohexamer when secreted. Interacts with envelope protein E. Interacts with host PRKAA1. As to quaternary structure, interacts (via N-terminus) with serine protease NS3. Forms a heterodimer with serine protease NS3. May form homooligomers. In terms of assembly, forms a heterodimer with NS2B. Interacts with NS4B. Interacts with unphosphorylated RNA-directed RNA polymerase NS5; this interaction stimulates RNA-directed RNA polymerase NS5 guanylyltransferase activity. Interacts with host SHFL. As to quaternary structure, interacts with host MAVS; this interaction inhibits the synthesis of IFN-beta. Interacts with host SHFL. Interacts with host AUP1; the interaction occurs in the presence of Dengue virus NS4B and induces lipophagy which facilitates production of virus progeny particles. May interact with host SRPRA and SEC61G. Interacts with serine protease NS3. In terms of assembly, homodimer. Interacts with host STAT2; this interaction inhibits the phosphorylation of the latter, and, when all viral proteins are present (polyprotein), targets STAT2 for degradation. Interacts with serine protease NS3. Interacts with host PAF1 complex; the interaction may prevent the recruitment of the PAF1 complex to interferon-responsive genes, and thus reduces the immune response. Post-translationally, specific enzymatic cleavages in vivo yield mature proteins. Cleavages in the lumen of endoplasmic reticulum are performed by host signal peptidase, whereas cleavages in the cytoplasmic side are performed by serine protease NS3. Signal cleavage at the 2K-4B site requires a prior NS3 protease-mediated cleavage at the 4A-2K site. Cleaved in post-Golgi vesicles by a host furin, releasing the mature small envelope protein M, and peptide pr. This cleavage is incomplete as up to 30% of viral particles still carry uncleaved prM. In terms of processing, N-glycosylated. Post-translationally, N-glycosylated. The excreted form is glycosylated and this is required for efficient secretion of the protein from infected cells. Acetylated by host KAT5. Acetylation modulates NS3 RNA-binding and unwinding activities and plays an important positive role for viral replication. In terms of processing, sumoylation of RNA-directed RNA polymerase NS5 increases NS5 protein stability allowing proper viral RNA replication. Post-translationally, phosphorylated on serines residues. This phosphorylation may trigger NS5 nuclear localization.

It is found in the virion. The protein resides in the host nucleus. The protein localises to the host cytoplasm. It localises to the host perinuclear region. Its subcellular location is the secreted. It is found in the virion membrane. The protein resides in the host endoplasmic reticulum membrane. The protein localises to the host mitochondrion. It catalyses the reaction Selective hydrolysis of -Xaa-Xaa-|-Yaa- bonds in which each of the Xaa can be either Arg or Lys and Yaa can be either Ser or Ala.. It carries out the reaction RNA(n) + a ribonucleoside 5'-triphosphate = RNA(n+1) + diphosphate. The enzyme catalyses a ribonucleoside 5'-triphosphate + H2O = a ribonucleoside 5'-diphosphate + phosphate + H(+). The catalysed reaction is ATP + H2O = ADP + phosphate + H(+). It catalyses the reaction a 5'-end (5'-triphosphoguanosine)-ribonucleoside in mRNA + S-adenosyl-L-methionine = a 5'-end (N(7)-methyl 5'-triphosphoguanosine)-ribonucleoside in mRNA + S-adenosyl-L-homocysteine. It carries out the reaction a 5'-end (N(7)-methyl 5'-triphosphoguanosine)-ribonucleoside in mRNA + S-adenosyl-L-methionine = a 5'-end (N(7)-methyl 5'-triphosphoguanosine)-(2'-O-methyl-ribonucleoside) in mRNA + S-adenosyl-L-homocysteine + H(+). Functionally, plays a role in virus budding by binding to the cell membrane and gathering the viral RNA into a nucleocapsid that forms the core of a mature virus particle. During virus entry, may induce genome penetration into the host cytoplasm after hemifusion induced by the surface proteins. Can migrate to the cell nucleus where it modulates host functions. Overcomes the anti-viral effects of host EXOC1 by sequestering and degrading the latter through the proteasome degradation pathway. Inhibits RNA silencing by interfering with host Dicer. Its function is as follows. Prevents premature fusion activity of envelope proteins in trans-Golgi by binding to envelope protein E at pH6.0. After virion release in extracellular space, gets dissociated from E dimers. In terms of biological role, acts as a chaperone for envelope protein E during intracellular virion assembly by masking and inactivating envelope protein E fusion peptide. prM is the only viral peptide matured by host furin in the trans-Golgi network probably to avoid catastrophic activation of the viral fusion activity in acidic Golgi compartment prior to virion release. prM-E cleavage is inefficient, and many virions are only partially matured. These uncleaved prM would play a role in immune evasion. Functionally, may play a role in virus budding. Exerts cytotoxic effects by activating a mitochondrial apoptotic pathway through M ectodomain. May display a viroporin activity. Binds to host cell surface receptor and mediates fusion between viral and cellular membranes. Envelope protein is synthesized in the endoplasmic reticulum in the form of heterodimer with protein prM. They play a role in virion budding in the ER, and the newly formed immature particle is covered with 60 spikes composed of heterodimer between precursor prM and envelope protein E. The virion is transported to the Golgi apparatus where the low pH causes dissociation of PrM-E heterodimers and formation of E homodimers. prM-E cleavage is inefficient, and many virions are only partially matured. These uncleaved prM would play a role in immune evasion. Its function is as follows. Involved in immune evasion, pathogenesis and viral replication. Once cleaved off the polyprotein, is targeted to three destinations: the viral replication cycle, the plasma membrane and the extracellular compartment. Essential for viral replication. Required for formation of the replication complex and recruitment of other non-structural proteins to the ER-derived membrane structures. Excreted as a hexameric lipoparticle that plays a role against host immune response. Antagonizing the complement function. Binds to the host macrophages and dendritic cells. Inhibits signal transduction originating from Toll-like receptor 3 (TLR3). Mediates complement activation, which may contribute to the pathogenesis of the vascular leakage that occurs in severe dengue disease. Activates autophagy through the AMPK/ERK/mTOR signaling pathway. Mechanistically, acts as the assembly platform for STK11-AMPK interactions and promotes STK11-AMPK interactions. In turn, promotes phosphorylation of the AMPK kinase structural domain and activates AMPK, thereby positively regulating the AMPK/ERK/mTOR signaling pathway and inducing autophagy. In terms of biological role, disrupts the host endothelial glycocalyx layer of host pulmonary microvascular endothelial cells, inducing degradation of sialic acid and shedding of heparan sulfate proteoglycans. NS1 induces expression of sialidases, heparanase, and activates cathepsin L, which activates heparanase via enzymatic cleavage. These effects are probably linked to the endothelial hyperpermeability observed in severe dengue disease. Functionally, component of the viral RNA replication complex that functions in virion assembly and antagonizes the host immune response. Required cofactor for the serine protease function of NS3. May have membrane-destabilizing activity and form viroporins. Its function is as follows. Displays three enzymatic activities: serine protease, NTPase and RNA helicase. NS3 serine protease, in association with NS2B, performs its autocleavage and cleaves the polyprotein at dibasic sites in the cytoplasm: C-prM, NS2A-NS2B, NS2B-NS3, NS3-NS4A, NS4A-2K and NS4B-NS5. NS3 RNA helicase binds RNA and unwinds dsRNA in the 3' to 5' direction. In terms of biological role, regulates the ATPase activity of the NS3 helicase activity. NS4A allows NS3 helicase to conserve energy during unwinding. Plays a role in the inhibition of the host innate immune response. Interacts with host MAVS and thereby prevents the interaction between RIGI and MAVS. In turn, IFN-beta production is impaired. Interacts with host AUP1 which mediates induction of lipophagy in host cells and facilitates production of virus progeny particles. Functionally, functions as a signal peptide for NS4B and is required for the interferon antagonism activity of the latter. Induces the formation of ER-derived membrane vesicles where the viral replication takes place. Inhibits interferon (IFN)-induced host STAT1 phosphorylation and nuclear translocation, thereby preventing the establishment of cellular antiviral state by blocking the IFN-alpha/beta pathway. Its function is as follows. Replicates the viral (+) and (-) RNA genome, and performs the capping of genomes in the cytoplasm. NS5 methylates viral RNA cap at guanine N-7 and ribose 2'-O positions. Besides its role in RNA genome replication, also prevents the establishment of cellular antiviral state by blocking the interferon-alpha/beta (IFN-alpha/beta) signaling pathway. Inhibits host TYK2 and STAT2 phosphorylation, thereby preventing activation of JAK-STAT signaling pathway. May reduce immune responses by preventing the recruitment of the host PAF1 complex to interferon-responsive genes. The protein is Genome polyprotein of Aedimorphus (Red guenon).